The sequence spans 215 residues: Large ribosomal subunit protein uL1 (215 aa).

It belongs to the universal ribosomal protein uL1 family. Part of the 50S ribosomal subunit.

Binds directly to 23S rRNA. Probably involved in E site tRNA release. In terms of biological role, protein L1 is also a translational repressor protein, it controls the translation of its operon by binding to its mRNA. The protein is Large ribosomal subunit protein uL1 of Methanospirillum hungatei JF-1 (strain ATCC 27890 / DSM 864 / NBRC 100397 / JF-1).